Consider the following 365-residue polypeptide: Peptide chain release factor 2 (365 aa).

At Gln-252 the chain carries N5-methylglutamine.

The protein belongs to the prokaryotic/mitochondrial release factor family. Post-translationally, methylated by PrmC. Methylation increases the termination efficiency of RF2.

The protein localises to the cytoplasm. Functionally, peptide chain release factor 2 directs the termination of translation in response to the peptide chain termination codons UGA and UAA. The protein is Peptide chain release factor 2 of Proteus mirabilis (strain HI4320).